Consider the following 492-residue polypeptide: Fumarate hydratase 1, mitochondrial (492 aa).

The transit peptide at 1-28 (MSIYVASRRLSGGTTVTALRYATSLRSY) directs the protein to the mitochondrion. Substrate contacts are provided by residues 127–129 (SGT), 157–160 (HPND), 167–169 (SSN), and Thr215. His216 acts as the Proton donor/acceptor in catalysis. Ser346 is a catalytic residue. Substrate is bound by residues Ser347 and 352–354 (KVN).

The protein belongs to the class-II fumarase/aspartase family. Fumarase subfamily. In terms of assembly, homotetramer.

The protein localises to the mitochondrion. The catalysed reaction is (S)-malate = fumarate + H2O. It participates in carbohydrate metabolism; tricarboxylic acid cycle; (S)-malate from fumarate: step 1/1. With respect to regulation, fumarate hydratase activity (fumarate to L-malate) is strongly inhibited by phosphoenolpyruvate, citrate, oxaloacetate, ATP and ADP. Malate dehydratase activity (malate to fumarate) is activated by oxaloacetate, pyruvate, Asn and Gln. Malate dehydratase activity (malate to fumarate) is inhibited by citrate, succinate, ADP, ATP, glucose-6P and phosphoenolpyruvate. Functionally, catalyzes the reversible stereospecific interconversion of fumarate to L-malate. Catalyzes the hydration of fumarate to L-malate in the tricarboxylic acid (TCA) cycle to facilitate a transition step in the production of energy in the form of NADH. This is Fumarate hydratase 1, mitochondrial from Arabidopsis thaliana (Mouse-ear cress).